Consider the following 334-residue polypeptide: Beta-hexosaminidase (334 aa).

Residues D57, R65, R128, and 158 to 159 (KH) each bind substrate. Catalysis depends on H171, which acts as the Proton donor/acceptor. D242 acts as the Nucleophile in catalysis.

Belongs to the glycosyl hydrolase 3 family. NagZ subfamily.

Its subcellular location is the cytoplasm. It catalyses the reaction Hydrolysis of terminal non-reducing N-acetyl-D-hexosamine residues in N-acetyl-beta-D-hexosaminides.. It functions in the pathway cell wall biogenesis; peptidoglycan recycling. In terms of biological role, plays a role in peptidoglycan recycling by cleaving the terminal beta-1,4-linked N-acetylglucosamine (GlcNAc) from peptide-linked peptidoglycan fragments, giving rise to free GlcNAc, anhydro-N-acetylmuramic acid and anhydro-N-acetylmuramic acid-linked peptides. This is Beta-hexosaminidase from Methylococcus capsulatus (strain ATCC 33009 / NCIMB 11132 / Bath).